Consider the following 131-residue polypeptide: UPF0251 protein MMP0619 (131 aa).

This sequence belongs to the UPF0251 family.

The polypeptide is UPF0251 protein MMP0619 (Methanococcus maripaludis (strain DSM 14266 / JCM 13030 / NBRC 101832 / S2 / LL)).